The sequence spans 336 residues: Phosphate acyltransferase (336 aa).

This sequence belongs to the PlsX family. As to quaternary structure, homodimer. Probably interacts with PlsY.

The protein resides in the cytoplasm. The enzyme catalyses a fatty acyl-[ACP] + phosphate = an acyl phosphate + holo-[ACP]. Its pathway is lipid metabolism; phospholipid metabolism. Functionally, catalyzes the reversible formation of acyl-phosphate (acyl-PO(4)) from acyl-[acyl-carrier-protein] (acyl-ACP). This enzyme utilizes acyl-ACP as fatty acyl donor, but not acyl-CoA. In Pseudomonas fluorescens (strain ATCC BAA-477 / NRRL B-23932 / Pf-5), this protein is Phosphate acyltransferase.